The sequence spans 253 residues: REF/SRPP-like protein OsI_017815 (253 aa).

The disordered stretch occupies residues 1–26 (MADSGSDAPISNRPEEEVTVEKTPEM). Over residues 13–26 (RPEEEVTVEKTPEM) the composition is skewed to basic and acidic residues.

Belongs to the REF/SRPP family.

This chain is REF/SRPP-like protein OsI_017815, found in Oryza sativa subsp. indica (Rice).